The sequence spans 198 residues: Small ribosomal subunit protein uS4 (198 aa).

One can recognise an S4 RNA-binding domain in the interval 90-152 (TRLDNLVLRA…SRSNELFKEN (63 aa)).

This sequence belongs to the universal ribosomal protein uS4 family. In terms of assembly, part of the 30S ribosomal subunit. Contacts protein S5. The interaction surface between S4 and S5 is involved in control of translational fidelity.

In terms of biological role, one of the primary rRNA binding proteins, it binds directly to 16S rRNA where it nucleates assembly of the body of the 30S subunit. Functionally, with S5 and S12 plays an important role in translational accuracy. This is Small ribosomal subunit protein uS4 from Finegoldia magna (strain ATCC 29328 / DSM 20472 / WAL 2508) (Peptostreptococcus magnus).